The chain runs to 376 residues: MLPLSIKDDEYKPPKFNLFGKISGWFRSILSDKTSRNLFFFLCLNLSFAFVELLYGIWSNCLGLISDSFHMFFDSTAILAGLAASVISKWRDNDAFSYGYVRAEVLAGFVNGLFLIFTAFFIFSEGVERALAPPDVHHERLLLVSILGFVVNLIGIFVFKHGGHGHSHGSGHGHSHSLFNGALDQAHGHVDHCHSHEVKHGAAHSHDHAHGHGHFHSHDGPSLKETTGPSRQILQGVFLHILADTLGSIGVIASAIMMQNFGLMIADPICSILIAILIVVSVIPLLRESVGILMQRTPPLLENSLPQCYQRVQQLQGVYSLQEQHFWTLCSDVYVGTLKLIVAPDADARWILSQTHNIFTQAGVRQLYVQIDFAAM.

The Cytoplasmic portion of the chain corresponds to 1-37 (MLPLSIKDDEYKPPKFNLFGKISGWFRSILSDKTSRN). Residues 38–58 (LFFFLCLNLSFAFVELLYGIW) form a helical membrane-spanning segment. Residues 59 to 67 (SNCLGLISD) lie on the Lumenal side of the membrane. The chain crosses the membrane as a helical span at residues 68 to 88 (SFHMFFDSTAILAGLAASVIS). Over 89 to 102 (KWRDNDAFSYGYVR) the chain is Cytoplasmic. The helical transmembrane segment at 103–123 (AEVLAGFVNGLFLIFTAFFIF) threads the bilayer. The Lumenal segment spans residues 124–140 (SEGVERALAPPDVHHER). The helical transmembrane segment at 141–161 (LLLVSILGFVVNLIGIFVFKH) threads the bilayer. The tract at residues 161-218 (HGGHGHSHGSGHGHSHSLFNGALDQAHGHVDHCHSHEVKHGAAHSHDHAHGHGHFHSH) is his-rich loop. The Cytoplasmic segment spans residues 162-236 (GGHGHSHGSG…TGPSRQILQG (75 aa)). A compositionally biased stretch (basic and acidic residues) spans 194–222 (HSHEVKHGAAHSHDHAHGHGHFHSHDGPS). The segment at 194-226 (HSHEVKHGAAHSHDHAHGHGHFHSHDGPSLKET) is disordered. Residues 237-257 (VFLHILADTLGSIGVIASAIM) form a helical membrane-spanning segment. The Lumenal portion of the chain corresponds to 258-262 (MQNFG). Residues 263 to 283 (LMIADPICSILIAILIVVSVI) form a helical membrane-spanning segment. Topologically, residues 284-376 (PLLRESVGIL…LYVQIDFAAM (93 aa)) are cytoplasmic.

The protein belongs to the cation diffusion facilitator (CDF) transporter (TC 2.A.4) family. SLC30A subfamily. In terms of assembly, homooligomer. Highly expressed in megakaryocytes and other bone marrow cells and in the epithelium of the small intestine. Expressed in testis (in Leydig cells), adrenal gland (in adrenal medula, zona fasciculata and zona of reticularis), and pituitary gland (in somatotropic cells).

Its subcellular location is the golgi apparatus membrane. It is found in the cytoplasmic vesicle. The protein localises to the golgi apparatus. The protein resides in the trans-Golgi network. It localises to the sarcoplasmic reticulum. Its subcellular location is the mitochondrion. The enzyme catalyses Zn(2+)(in) = Zn(2+)(out). In terms of biological role, zinc ion transporter mediating zinc entry from the cytosol into the lumen of organelles along the secretory pathway. By contributing to zinc ion homeostasis within the early secretory pathway, regulates the activation and folding of enzymes like alkaline phosphatases. The chain is Zinc transporter 7 from Homo sapiens (Human).